We begin with the raw amino-acid sequence, 374 residues long: Queuine tRNA-ribosyltransferase (374 aa).

The active-site Proton acceptor is the D89. Substrate-binding positions include 89-93 (DSGGF), D143, Q187, and G214. Residues 245-251 (GVGKPED) are RNA binding. D264 acts as the Nucleophile in catalysis. The tract at residues 269–273 (TRNAR) is RNA binding; important for wobble base 34 recognition. Zn(2+)-binding residues include C302, C304, C307, and H333.

The protein belongs to the queuine tRNA-ribosyltransferase family. In terms of assembly, homodimer. Within each dimer, one monomer is responsible for RNA recognition and catalysis, while the other monomer binds to the replacement base PreQ1. The cofactor is Zn(2+).

It carries out the reaction 7-aminomethyl-7-carbaguanine + guanosine(34) in tRNA = 7-aminomethyl-7-carbaguanosine(34) in tRNA + guanine. It participates in tRNA modification; tRNA-queuosine biosynthesis. Functionally, catalyzes the base-exchange of a guanine (G) residue with the queuine precursor 7-aminomethyl-7-deazaguanine (PreQ1) at position 34 (anticodon wobble position) in tRNAs with GU(N) anticodons (tRNA-Asp, -Asn, -His and -Tyr). Catalysis occurs through a double-displacement mechanism. The nucleophile active site attacks the C1' of nucleotide 34 to detach the guanine base from the RNA, forming a covalent enzyme-RNA intermediate. The proton acceptor active site deprotonates the incoming PreQ1, allowing a nucleophilic attack on the C1' of the ribose to form the product. After dissociation, two additional enzymatic reactions on the tRNA convert PreQ1 to queuine (Q), resulting in the hypermodified nucleoside queuosine (7-(((4,5-cis-dihydroxy-2-cyclopenten-1-yl)amino)methyl)-7-deazaguanosine). The chain is Queuine tRNA-ribosyltransferase from Shewanella baltica (strain OS223).